A 275-amino-acid chain; its full sequence is NH(3)-dependent NAD(+) synthetase (275 aa).

ATP is bound at residue 46–53 (GISGGQDS). Aspartate 52 is a binding site for Mg(2+). Residue arginine 140 participates in deamido-NAD(+) binding. Threonine 160 lines the ATP pocket. Glutamate 165 serves as a coordination point for Mg(2+). Residues lysine 173 and aspartate 180 each contribute to the deamido-NAD(+) site. ATP-binding residues include lysine 189 and threonine 211. Deamido-NAD(+) is bound at residue 260 to 261 (HK).

Belongs to the NAD synthetase family. As to quaternary structure, homodimer.

The catalysed reaction is deamido-NAD(+) + NH4(+) + ATP = AMP + diphosphate + NAD(+) + H(+). The protein operates within cofactor biosynthesis; NAD(+) biosynthesis; NAD(+) from deamido-NAD(+) (ammonia route): step 1/1. Functionally, catalyzes the ATP-dependent amidation of deamido-NAD to form NAD. Uses ammonia as a nitrogen source. This chain is NH(3)-dependent NAD(+) synthetase, found in Erwinia tasmaniensis (strain DSM 17950 / CFBP 7177 / CIP 109463 / NCPPB 4357 / Et1/99).